Consider the following 329-residue polypeptide: 4-hydroxythreonine-4-phosphate dehydrogenase (329 aa).

The substrate site is built by His136 and Thr137. Positions 166, 211, and 266 each coordinate a divalent metal cation. The substrate site is built by Lys274, Asn283, and Arg292.

It belongs to the PdxA family. Homodimer. Requires Zn(2+) as cofactor. The cofactor is Mg(2+). Co(2+) is required as a cofactor.

It is found in the cytoplasm. The catalysed reaction is 4-(phosphooxy)-L-threonine + NAD(+) = 3-amino-2-oxopropyl phosphate + CO2 + NADH. It participates in cofactor biosynthesis; pyridoxine 5'-phosphate biosynthesis; pyridoxine 5'-phosphate from D-erythrose 4-phosphate: step 4/5. Functionally, catalyzes the NAD(P)-dependent oxidation of 4-(phosphooxy)-L-threonine (HTP) into 2-amino-3-oxo-4-(phosphooxy)butyric acid which spontaneously decarboxylates to form 3-amino-2-oxopropyl phosphate (AHAP). This is 4-hydroxythreonine-4-phosphate dehydrogenase from Escherichia coli O7:K1 (strain IAI39 / ExPEC).